The primary structure comprises 142 residues: 2-aminomuconate deaminase (142 aa).

It belongs to the 2-aminomuconate deaminase family. Homotetramer.

It catalyses the reaction (2Z,4E)-2-aminomuconate + H2O = (3E)-2-oxohex-3-enedioate + NH4(+). Its activity is regulated as follows. Slightly inhibited by Pb(2+), Hg(+) and Cu(2+). Its function is as follows. Involved in the modified meta-cleavage pathway for the 2-aminophenol catabolism. Only active toward 2-aminomuconic acid. The chain is 2-aminomuconate deaminase (amnD) from Pseudomonas sp.